The following is a 76-amino-acid chain: MLVISRKSGESFMIGDSIEVKILRIEGSEVKIGISAPSHVKIYRAEIYQKIVKENKMAVQVDIVDLSEVIFLDRNK.

It belongs to the CsrA/RsmA family. Homodimer; the beta-strands of each monomer intercalate to form a hydrophobic core, while the alpha-helices form wings that extend away from the core.

It localises to the cytoplasm. In terms of biological role, a translational regulator that binds mRNA to regulate translation initiation and/or mRNA stability. Usually binds in the 5'-UTR at or near the Shine-Dalgarno sequence preventing ribosome-binding, thus repressing translation. Its main target seems to be the major flagellin gene, while its function is anatagonized by FliW. This Pseudothermotoga lettingae (strain ATCC BAA-301 / DSM 14385 / NBRC 107922 / TMO) (Thermotoga lettingae) protein is Translational regulator CsrA.